Here is a 305-residue protein sequence, read N- to C-terminus: uncharacterized protein (305 aa).

This is an uncharacterized protein from Methanocaldococcus jannaschii (strain ATCC 43067 / DSM 2661 / JAL-1 / JCM 10045 / NBRC 100440) (Methanococcus jannaschii).